The sequence spans 289 residues: Ribosomal RNA small subunit methyltransferase A (289 aa).

Asparagine 21, leucine 23, glycine 48, glutamate 69, aspartate 94, and asparagine 120 together coordinate S-adenosyl-L-methionine.

Belongs to the class I-like SAM-binding methyltransferase superfamily. rRNA adenine N(6)-methyltransferase family. RsmA subfamily.

It localises to the cytoplasm. The enzyme catalyses adenosine(1518)/adenosine(1519) in 16S rRNA + 4 S-adenosyl-L-methionine = N(6)-dimethyladenosine(1518)/N(6)-dimethyladenosine(1519) in 16S rRNA + 4 S-adenosyl-L-homocysteine + 4 H(+). Specifically dimethylates two adjacent adenosines (A1518 and A1519) in the loop of a conserved hairpin near the 3'-end of 16S rRNA in the 30S particle. May play a critical role in biogenesis of 30S subunits. The chain is Ribosomal RNA small subunit methyltransferase A from Actinobacillus pleuropneumoniae serotype 3 (strain JL03).